Here is a 302-residue protein sequence, read N- to C-terminus: Arginase (302 aa).

Residues His103, Asp126, His128, and Asp130 each coordinate Mn(2+). Residues 128-132 (HGDLN), 139-141 (SGN), and Asp180 each bind substrate. Asp229 and Asp231 together coordinate Mn(2+). Residues Thr243 and Glu274 each contribute to the substrate site.

Belongs to the arginase family. Requires Mn(2+) as cofactor.

It carries out the reaction L-arginine + H2O = urea + L-ornithine. It functions in the pathway nitrogen metabolism; urea cycle; L-ornithine and urea from L-arginine: step 1/1. This Staphylococcus aureus (strain MRSA252) protein is Arginase (arg).